The sequence spans 3658 residues: Serine/threonine-protein kinase SMG1 (3658 aa).

Disordered stretches follow at residues 1 to 99 and 116 to 142; these read MSRR…TYGR and FTSVQHGSRALATKDMRKSQERSMSYS. Over residues 24–33 the composition is skewed to polar residues; it reads NDWQPRTDSA. 2 stretches are compositionally biased toward basic and acidic residues: residues 67-84 and 127-136; these read QRHDDTRGHADIQNDEKG and ATKDMRKSQE. Residue lysine 171 is modified to N6-acetyllysine. The 584-residue stretch at 1281-1864 folds into the FAT domain; it reads RELQKSIEVQ…LYPAIVGTIS (584 aa). An HEAT repeat occupies 1815-1850; the sequence is APWRGIIPQLFSRLNHPEVYVRQSICNLLCRVAQDS. The segment at 1896–1917 is disordered; it reads ECEGGSPPASQDSNKDEPKSGL. In terms of domain architecture, PI3K/PI4K catalytic spans 2122 to 2461; it reads VGGTITILPT…MEREITRSLF (340 aa). Residues 2128-2134 form a G-loop region; it reads ILPTKTK. The tract at residues 2330–2338 is catalytic loop; sequence GLGDRHLDN. An activation loop region spans residues 2350–2374; it reads HIDYNVCFEKGKSLRVPEKVPFRMT. Threonine 3547 is modified (phosphothreonine). Phosphoserine occurs at positions 3553 and 3567. Positions 3565–3576 are enriched in polar residues; that stretch reads ATSADTPPSTIP. Residues 3565 to 3588 form a disordered region; that stretch reads ATSADTPPSTIPGTGKSIACSPKK. Phosphothreonine occurs at positions 3570 and 3574. In terms of domain architecture, FATC spans 3626-3658; it reads RRMSVAEQVDYVIKEATNLDNLAQLYEGWTAWV.

It belongs to the PI3/PI4-kinase family. Component of the SMG1C complex composed of SMG1, SMG8 and SMG9; the recruitment of SMG8 to SMG1 N-terminus induces a large conformational change in the SMG1 C-terminal head domain containing the catalytic domain. Component of the transient SURF (SMG1-UPF1-eRF1-eRF3) complex. Part of a complex composed of SMG1, DHX34 and UPF1; within the complex DHX34 acts as a scaffolding protein to facilitate SMG1 phosphorylation of UPF1. Interacts with PRKCI. Interacts with TELO2 and TTI1. Interacts with RUVBL1 and RUVBL2. Interacts with DHX34 (via C-terminus); the interaction is RNA-independent. Requires Mn(2+) as cofactor. Autophosphorylated.

Its subcellular location is the nucleus. It is found in the cytoplasm. It carries out the reaction L-seryl-[protein] + ATP = O-phospho-L-seryl-[protein] + ADP + H(+). The catalysed reaction is L-threonyl-[protein] + ATP = O-phospho-L-threonyl-[protein] + ADP + H(+). With respect to regulation, inhibited by caffeine, LY294002 and wortmannin. In terms of biological role, serine/threonine protein kinase involved in both mRNA surveillance and genotoxic stress response pathways. Recognizes the substrate consensus sequence [ST]-Q. Plays a central role in nonsense-mediated decay (NMD) of mRNAs containing premature stop codons by phosphorylating UPF1/RENT1. Recruited by release factors to stalled ribosomes together with SMG8 and SMG9 (forming the SMG1C protein kinase complex), and UPF1 to form the transient SURF (SMG1-UPF1-eRF1-eRF3) complex. In EJC-dependent NMD, the SURF complex associates with the exon junction complex (EJC) through UPF2 and allows the formation of an UPF1-UPF2-UPF3 surveillance complex which is believed to activate NMD. Also acts as a genotoxic stress-activated protein kinase that displays some functional overlap with ATM. Can phosphorylate p53/TP53 and is required for optimal p53/TP53 activation after cellular exposure to genotoxic stress. Its depletion leads to spontaneous DNA damage and increased sensitivity to ionizing radiation (IR). May activate PRKCI but not PRKCZ. The polypeptide is Serine/threonine-protein kinase SMG1 (Mus musculus (Mouse)).